The following is a 377-amino-acid chain: DNA-directed RNA polymerase subunit alpha (377 aa).

Residues 1-259 (MSDSSHNLLY…KHFSVFEKMD (259 aa)) form an alpha N-terminal domain (alpha-NTD) region. Residues 276–377 (KDDILHKLVL…KIRSSKNTKG (102 aa)) form an alpha C-terminal domain (alpha-CTD) region.

The protein belongs to the RNA polymerase alpha chain family. As to quaternary structure, homodimer. The RNAP catalytic core consists of 2 alpha, 1 beta, 1 beta' and 1 omega subunit. When a sigma factor is associated with the core the holoenzyme is formed, which can initiate transcription.

It catalyses the reaction RNA(n) + a ribonucleoside 5'-triphosphate = RNA(n+1) + diphosphate. DNA-dependent RNA polymerase catalyzes the transcription of DNA into RNA using the four ribonucleoside triphosphates as substrates. The sequence is that of DNA-directed RNA polymerase subunit alpha from Chlamydia trachomatis serovar D (strain ATCC VR-885 / DSM 19411 / UW-3/Cx).